The sequence spans 146 residues: Small RNA-binding protein 11, chloroplastic (146 aa).

A chloroplast-targeting transit peptide spans methionine 1–glycine 31. In terms of domain architecture, RRM spans serine 34 to alanine 112. Serine 42 is modified (phosphoserine).

In terms of tissue distribution, expressed in rosette leaves, cauline leaves, stems and flowers.

The protein resides in the plastid. Its subcellular location is the chloroplast. Functionally, probable RNA-binding protein that may be involved in salt and oxidative stress tolerance. The chain is Small RNA-binding protein 11, chloroplastic from Arabidopsis thaliana (Mouse-ear cress).